Here is a 459-residue protein sequence, read N- to C-terminus: Cysteine--tRNA ligase (459 aa).

Cys-28 provides a ligand contact to Zn(2+). The short motif at 30–40 (VTVYDLCHIGH) is the 'HIGH' region element. The Zn(2+) site is built by Cys-209, His-234, and Glu-238. Positions 266–270 (KMSKS) match the 'KMSKS' region motif. Lys-269 contributes to the ATP binding site.

Belongs to the class-I aminoacyl-tRNA synthetase family. As to quaternary structure, monomer. Zn(2+) serves as cofactor.

The protein resides in the cytoplasm. The enzyme catalyses tRNA(Cys) + L-cysteine + ATP = L-cysteinyl-tRNA(Cys) + AMP + diphosphate. The protein is Cysteine--tRNA ligase of Histophilus somni (strain 129Pt) (Haemophilus somnus).